The following is a 75-amino-acid chain: Small ribosomal subunit protein bS18 (75 aa).

This sequence belongs to the bacterial ribosomal protein bS18 family. As to quaternary structure, part of the 30S ribosomal subunit. Forms a tight heterodimer with protein bS6.

Its function is as follows. Binds as a heterodimer with protein bS6 to the central domain of the 16S rRNA, where it helps stabilize the platform of the 30S subunit. In Buchnera aphidicola subsp. Schizaphis graminum (strain Sg), this protein is Small ribosomal subunit protein bS18.